The sequence spans 953 residues: Lysosomal alpha-glucosidase (953 aa).

An N-terminal signal peptide occupies residues 1 to 27 (MNIRKPLCSNSVVGACTLISLTTAVIL). A propeptide spanning residues 28–69 (GHLMLRELMLLPQDLHESSSGLWKTYRPHHQEGYKPGPLHIQ) is cleaved from the precursor. One can recognise a P-type domain in the interval 80 to 131 (TQCDVPPSSRFDCAPDKGISQEQCEARGCCYVPAGQVLKEPQIGQPWCFFPP). Cystine bridges form between cysteine 82-cysteine 109, cysteine 92-cysteine 108, and cysteine 103-cysteine 127. Residues asparagine 140, asparagine 233, and asparagine 390 are each glycosylated (N-linked (GlcNAc...) asparagine). Aspartate 404 contacts substrate. Asparagine 470 carries an N-linked (GlcNAc...) asparagine glycan. Aspartate 518 acts as the Nucleophile in catalysis. Residue glutamate 521 is part of the active site. The cysteines at positions 533 and 558 are disulfide-linked. Substrate is bound by residues arginine 600 and aspartate 616. The cysteines at positions 647 and 658 are disulfide-linked. A substrate-binding site is contributed by histidine 674. 3 N-linked (GlcNAc...) asparagine glycosylation sites follow: asparagine 883, asparagine 926, and asparagine 933.

This sequence belongs to the glycosyl hydrolase 31 family.

The protein resides in the lysosome. The protein localises to the lysosome membrane. The catalysed reaction is Hydrolysis of terminal, non-reducing (1-&gt;4)-linked alpha-D-glucose residues with release of alpha-D-glucose.. Essential for the degradation of glycogen in lysosomes. Has highest activity on alpha-1,4-linked glycosidic linkages, but can also hydrolyze alpha-1,6-linked glucans. The sequence is that of Lysosomal alpha-glucosidase (Gaa) from Mus musculus (Mouse).